The primary structure comprises 122 residues: Large ribosomal subunit protein uL14 (122 aa).

It belongs to the universal ribosomal protein uL14 family. Part of the 50S ribosomal subunit. Forms a cluster with proteins L3 and L19. In the 70S ribosome, L14 and L19 interact and together make contacts with the 16S rRNA in bridges B5 and B8.

Binds to 23S rRNA. Forms part of two intersubunit bridges in the 70S ribosome. The chain is Large ribosomal subunit protein uL14 from Laribacter hongkongensis (strain HLHK9).